We begin with the raw amino-acid sequence, 139 residues long: Large ribosomal subunit protein uL22 (139 aa).

A disordered region spans residues 1 to 22 (MVSENEKTRRPKRSIQHRQNKD). Positions 9–18 (RRPKRSIQHR) are enriched in basic residues.

It belongs to the universal ribosomal protein uL22 family. Part of the 50S ribosomal subunit.

Its function is as follows. This protein binds specifically to 23S rRNA; its binding is stimulated by other ribosomal proteins, e.g. L4, L17, and L20. It is important during the early stages of 50S assembly. It makes multiple contacts with different domains of the 23S rRNA in the assembled 50S subunit and ribosome. The globular domain of the protein is located near the polypeptide exit tunnel on the outside of the subunit, while an extended beta-hairpin is found that lines the wall of the exit tunnel in the center of the 70S ribosome. This chain is Large ribosomal subunit protein uL22, found in Pseudothermotoga lettingae (strain ATCC BAA-301 / DSM 14385 / NBRC 107922 / TMO) (Thermotoga lettingae).